The primary structure comprises 111 residues: Prefoldin subunit 2 (111 aa).

Coiled-coil stretches lie at residues 1–36 and 72–92; these read MEQR…KDEH and LETK…TLIQ.

Belongs to the prefoldin subunit beta family. As to quaternary structure, heterohexamer of two PFD-alpha type and four PFD-beta type subunits.

It localises to the cytoplasm. Its function is as follows. Binds specifically to cytosolic chaperonin (c-CPN) and transfers target proteins to it. Binds to nascent polypeptide chain and promotes folding in an environment in which there are many competing pathways for nonnative proteins. The sequence is that of Prefoldin subunit 2 (GIM4) from Saccharomyces cerevisiae (strain ATCC 204508 / S288c) (Baker's yeast).